Here is a 431-residue protein sequence, read N- to C-terminus: Asparagine--tRNA ligase 1 (431 aa).

The protein belongs to the class-II aminoacyl-tRNA synthetase family. Homodimer.

The protein resides in the cytoplasm. The catalysed reaction is tRNA(Asn) + L-asparagine + ATP = L-asparaginyl-tRNA(Asn) + AMP + diphosphate + H(+). The sequence is that of Asparagine--tRNA ligase 1 (asnS1) from Lactiplantibacillus plantarum (strain ATCC BAA-793 / NCIMB 8826 / WCFS1) (Lactobacillus plantarum).